A 204-amino-acid polypeptide reads, in one-letter code: Cytochrome c biogenesis ATP-binding export protein CcmA (204 aa).

Residues 2–203 form the ABC transporter domain; the sequence is LEADNLECVR…PAGTVRELRL (202 aa). 34–41 contributes to the ATP binding site; the sequence is GRNGAGKT.

Belongs to the ABC transporter superfamily. CcmA exporter (TC 3.A.1.107) family. The complex is composed of two ATP-binding proteins (CcmA) and two transmembrane proteins (CcmB).

The protein localises to the cell inner membrane. It carries out the reaction heme b(in) + ATP + H2O = heme b(out) + ADP + phosphate + H(+). Functionally, part of the ABC transporter complex CcmAB involved in the biogenesis of c-type cytochromes; once thought to export heme, this seems not to be the case, but its exact role is uncertain. Responsible for energy coupling to the transport system. In Dechloromonas aromatica (strain RCB), this protein is Cytochrome c biogenesis ATP-binding export protein CcmA.